The primary structure comprises 250 residues: Triosephosphate isomerase (250 aa).

9–11 (NWK) contacts substrate. His-95 functions as the Electrophile in the catalytic mechanism. The Proton acceptor role is filled by Glu-167. Substrate is bound by residues Gly-173, Ser-213, and 234 to 235 (GG).

Belongs to the triosephosphate isomerase family. As to quaternary structure, homodimer.

Its subcellular location is the cytoplasm. It catalyses the reaction D-glyceraldehyde 3-phosphate = dihydroxyacetone phosphate. Its pathway is carbohydrate biosynthesis; gluconeogenesis. The protein operates within carbohydrate degradation; glycolysis; D-glyceraldehyde 3-phosphate from glycerone phosphate: step 1/1. In terms of biological role, involved in the gluconeogenesis. Catalyzes stereospecifically the conversion of dihydroxyacetone phosphate (DHAP) to D-glyceraldehyde-3-phosphate (G3P). The chain is Triosephosphate isomerase from Flavobacterium johnsoniae (strain ATCC 17061 / DSM 2064 / JCM 8514 / BCRC 14874 / CCUG 350202 / NBRC 14942 / NCIMB 11054 / UW101) (Cytophaga johnsonae).